A 453-amino-acid polypeptide reads, in one-letter code: Glutamyl-tRNA(Gln) amidotransferase subunit A (453 aa).

Residues lysine 56 and serine 131 each act as charge relay system in the active site. Serine 155 acts as the Acyl-ester intermediate in catalysis.

This sequence belongs to the amidase family. GatA subfamily. As to quaternary structure, heterotrimer of A, B and C subunits.

It catalyses the reaction L-glutamyl-tRNA(Gln) + L-glutamine + ATP + H2O = L-glutaminyl-tRNA(Gln) + L-glutamate + ADP + phosphate + H(+). Allows the formation of correctly charged Gln-tRNA(Gln) through the transamidation of misacylated Glu-tRNA(Gln) in organisms which lack glutaminyl-tRNA synthetase. The reaction takes place in the presence of glutamine and ATP through an activated gamma-phospho-Glu-tRNA(Gln). The sequence is that of Glutamyl-tRNA(Gln) amidotransferase subunit A from Campylobacter jejuni subsp. jejuni serotype O:6 (strain 81116 / NCTC 11828).